The sequence spans 572 residues: Phosphoenolpyruvate-protein phosphotransferase (572 aa).

Catalysis depends on His191, which acts as the Tele-phosphohistidine intermediate. Residues Arg298 and Arg334 each coordinate phosphoenolpyruvate. Residues Glu433 and Asp457 each coordinate Mg(2+). Phosphoenolpyruvate-binding positions include 456–457 (ND) and Arg467. Cys504 serves as the catalytic Proton donor.

This sequence belongs to the PEP-utilizing enzyme family. In terms of assembly, homodimer. Mg(2+) is required as a cofactor.

The protein localises to the cytoplasm. The catalysed reaction is L-histidyl-[protein] + phosphoenolpyruvate = N(pros)-phospho-L-histidyl-[protein] + pyruvate. Functionally, general (non sugar-specific) component of the phosphoenolpyruvate-dependent sugar phosphotransferase system (sugar PTS). This major carbohydrate active-transport system catalyzes the phosphorylation of incoming sugar substrates concomitantly with their translocation across the cell membrane. Enzyme I transfers the phosphoryl group from phosphoenolpyruvate (PEP) to the phosphoryl carrier protein (HPr). In Staphylococcus aureus (strain MRSA252), this protein is Phosphoenolpyruvate-protein phosphotransferase (ptsI).